The primary structure comprises 485 residues: N-succinylglutamate 5-semialdehyde dehydrogenase 2 (485 aa).

NAD(+) is bound at residue 221-226 (GSAAAG). Active-site residues include Glu244 and Cys279.

Belongs to the aldehyde dehydrogenase family. AstD subfamily.

It catalyses the reaction N-succinyl-L-glutamate 5-semialdehyde + NAD(+) + H2O = N-succinyl-L-glutamate + NADH + 2 H(+). It participates in amino-acid degradation; L-arginine degradation via AST pathway; L-glutamate and succinate from L-arginine: step 4/5. In terms of biological role, catalyzes the NAD-dependent reduction of succinylglutamate semialdehyde into succinylglutamate. This chain is N-succinylglutamate 5-semialdehyde dehydrogenase 2, found in Caulobacter vibrioides (strain ATCC 19089 / CIP 103742 / CB 15) (Caulobacter crescentus).